The chain runs to 1537 residues: Histone-lysine N-methyltransferase, H3 lysine-79 specific (1537 aa).

One can recognise a DOT1 domain in the interval glutamate 16–lysine 330. S-adenosyl-L-methionine contacts are provided by residues tyrosine 136 to threonine 139, phenylalanine 159 to glutamine 168, glutamate 186, and aspartate 222 to phenylalanine 223. Residue serine 297 is modified to Phosphoserine. The span at leucine 334–lysine 350 shows a compositional bias: basic and acidic residues. The tract at residues leucine 334 to valine 467 is disordered. At serine 374 the chain carries Phosphoserine. A required for interaction with nucleosomes and DNA region spans residues proline 391 to lysine 416. Over residues lysine 393–lysine 416 the composition is skewed to basic residues. Residues glutamine 439 to glutamine 450 are compositionally biased toward polar residues. A phosphoserine mark is found at serine 448 and serine 471. Threonine 480 is modified (phosphothreonine). Residues serine 775 and serine 786 each carry the phosphoserine modification. Disordered stretches follow at residues leucine 785–arginine 853, arginine 893–serine 912, threonine 957–asparagine 1128, and serine 1145–serine 1243. Residues leucine 800 to glutamate 809 are compositionally biased toward basic and acidic residues. Serine 826 is subject to Phosphoserine. Serine 834 bears the Phosphoserine; by MAPK11 mark. Positions lysine 844 to arginine 853 are enriched in basic and acidic residues. 3 stretches are compositionally biased toward polar residues: residues serine 899–serine 912, aspartate 966–glutamine 986, and proline 994–proline 1010. Threonine 900 bears the Phosphothreonine; by MAPK11 mark. Serine 902 carries the phosphoserine; by MAPK11 modification. Position 984 is a phosphothreonine; by MAPK11 (threonine 984). A Phosphoserine modification is found at serine 997. Residues serine 1001 and serine 1009 each carry the phosphoserine; by MAPK11 modification. Serine 1035 carries the phosphoserine modification. Positions threonine 1048–threonine 1068 are enriched in polar residues. Serine 1093 is subject to Phosphoserine. Serine 1104 carries the phosphoserine; by MAPK11 modification. Residues threonine 1118–asparagine 1128 are compositionally biased toward polar residues. Residues glutamine 1158 to proline 1171 are compositionally biased toward basic and acidic residues. Residues leucine 1172–threonine 1184 are compositionally biased toward polar residues. The segment covering serine 1185–proline 1195 has biased composition (acidic residues). Residues serine 1213 and serine 1246 each carry the phosphoserine modification. Positions glycine 1334–alanine 1410 are disordered.

It belongs to the class I-like SAM-binding methyltransferase superfamily. DOT1 family. In terms of assembly, interacts with MLLT10.

It localises to the nucleus. It catalyses the reaction L-lysyl(79)-[histone H3] + 3 S-adenosyl-L-methionine = N(6),N(6),N(6)-trimethyl-L-lysyl(79)-[histone H3] + 3 S-adenosyl-L-homocysteine + 3 H(+). In terms of biological role, histone methyltransferase. Methylates 'Lys-79' of histone H3. Nucleosomes are preferred as substrate compared to free histones. Binds to DNA. The polypeptide is Histone-lysine N-methyltransferase, H3 lysine-79 specific (Homo sapiens (Human)).